The sequence spans 506 residues: Glutamate--tRNA ligase (506 aa).

A 'HIGH' region motif is present at residues 23–33; it reads PSPTGTPHVGL. A 'KMSKS' region motif is present at residues 267–271; that stretch reads KLSKR. Lysine 270 is a binding site for ATP.

It belongs to the class-I aminoacyl-tRNA synthetase family. Glutamate--tRNA ligase type 1 subfamily. Monomer.

It is found in the cytoplasm. It carries out the reaction tRNA(Glu) + L-glutamate + ATP = L-glutamyl-tRNA(Glu) + AMP + diphosphate. Its function is as follows. Catalyzes the attachment of glutamate to tRNA(Glu) in a two-step reaction: glutamate is first activated by ATP to form Glu-AMP and then transferred to the acceptor end of tRNA(Glu). The chain is Glutamate--tRNA ligase from Clavibacter michiganensis subsp. michiganensis (strain NCPPB 382).